The following is a 198-amino-acid chain: Cell division protein SepF (198 aa).

Residues 170-198 are disordered; that stretch reads EVPQPPARPARPASTNPPAWGNETNRMAQ. Residues 179–188 are compositionally biased toward low complexity; sequence ARPASTNPPA.

It belongs to the SepF family. Homodimer. Interacts with FtsZ.

It localises to the cytoplasm. Cell division protein that is part of the divisome complex and is recruited early to the Z-ring. Probably stimulates Z-ring formation, perhaps through the cross-linking of FtsZ protofilaments. Its function overlaps with FtsA. This is Cell division protein SepF from Trichormus variabilis (strain ATCC 29413 / PCC 7937) (Anabaena variabilis).